The sequence spans 110 residues: Putative membrane protein insertion efficiency factor (110 aa).

This sequence belongs to the UPF0161 family.

The protein resides in the cell inner membrane. Its function is as follows. Could be involved in insertion of integral membrane proteins into the membrane. This is Putative membrane protein insertion efficiency factor from Aliarcobacter butzleri (strain RM4018) (Arcobacter butzleri).